The chain runs to 652 residues: DNA ligase (652 aa).

Residues 29–33 (DAEYD), 78–79 (SL), and glutamate 107 each bind NAD(+). Lysine 109 functions as the N6-AMP-lysine intermediate in the catalytic mechanism. Arginine 130, glutamate 164, lysine 278, and lysine 302 together coordinate NAD(+). Zn(2+) is bound by residues cysteine 395, cysteine 398, cysteine 413, and cysteine 418. One can recognise a BRCT domain in the interval 577–652 (DENAALSGMT…IKDEAWLESL (76 aa)).

The protein belongs to the NAD-dependent DNA ligase family. LigA subfamily. Mg(2+) serves as cofactor. It depends on Mn(2+) as a cofactor.

It catalyses the reaction NAD(+) + (deoxyribonucleotide)n-3'-hydroxyl + 5'-phospho-(deoxyribonucleotide)m = (deoxyribonucleotide)n+m + AMP + beta-nicotinamide D-nucleotide.. DNA ligase that catalyzes the formation of phosphodiester linkages between 5'-phosphoryl and 3'-hydroxyl groups in double-stranded DNA using NAD as a coenzyme and as the energy source for the reaction. It is essential for DNA replication and repair of damaged DNA. The protein is DNA ligase of Streptococcus suis (strain 98HAH33).